Consider the following 138-residue polypeptide: Cell division protein SepF (138 aa).

Belongs to the SepF family. In terms of assembly, homodimer. Interacts with FtsZ.

The protein resides in the cytoplasm. Its function is as follows. Cell division protein that is part of the divisome complex and is recruited early to the Z-ring. Probably stimulates Z-ring formation, perhaps through the cross-linking of FtsZ protofilaments. Its function overlaps with FtsA. The chain is Cell division protein SepF from Limosilactobacillus reuteri (strain DSM 20016) (Lactobacillus reuteri).